We begin with the raw amino-acid sequence, 99 residues long: Aspartyl/glutamyl-tRNA(Asn/Gln) amidotransferase subunit C (99 aa).

It belongs to the GatC family. As to quaternary structure, heterotrimer of A, B and C subunits.

The catalysed reaction is L-glutamyl-tRNA(Gln) + L-glutamine + ATP + H2O = L-glutaminyl-tRNA(Gln) + L-glutamate + ADP + phosphate + H(+). It carries out the reaction L-aspartyl-tRNA(Asn) + L-glutamine + ATP + H2O = L-asparaginyl-tRNA(Asn) + L-glutamate + ADP + phosphate + 2 H(+). In terms of biological role, allows the formation of correctly charged Asn-tRNA(Asn) or Gln-tRNA(Gln) through the transamidation of misacylated Asp-tRNA(Asn) or Glu-tRNA(Gln) in organisms which lack either or both of asparaginyl-tRNA or glutaminyl-tRNA synthetases. The reaction takes place in the presence of glutamine and ATP through an activated phospho-Asp-tRNA(Asn) or phospho-Glu-tRNA(Gln). The sequence is that of Aspartyl/glutamyl-tRNA(Asn/Gln) amidotransferase subunit C from Polaromonas naphthalenivorans (strain CJ2).